We begin with the raw amino-acid sequence, 477 residues long: Asparaginyl-tRNA synthetase (477 aa).

A mitochondrion-targeting transit peptide spans 1–14 (MLGVRCLLRSVRFC). The residue at position 353 (Lys353) is an N6-acetyllysine.

This sequence belongs to the class-II aminoacyl-tRNA synthetase family. Homodimer.

It localises to the mitochondrion matrix. The protein resides in the mitochondrion. The enzyme catalyses tRNA(Asn) + L-asparagine + ATP = L-asparaginyl-tRNA(Asn) + AMP + diphosphate + H(+). Mitochondrial aminoacyl-tRNA synthetase that catalyzes the specific attachment of the asparagine amino acid (aa) to the homologous transfer RNA (tRNA), further participating in protein synthesis. The reaction occurs in a two steps: asparagine is first activated by ATP to form Asn-AMP and then transferred to the acceptor end of tRNA(Asn). This chain is Asparaginyl-tRNA synthetase, found in Homo sapiens (Human).